A 216-amino-acid chain; its full sequence is Cytidylate kinase (216 aa).

ATP is bound at residue Gly-9 to Thr-17.

It belongs to the cytidylate kinase family. Type 1 subfamily.

The protein localises to the cytoplasm. The catalysed reaction is CMP + ATP = CDP + ADP. It carries out the reaction dCMP + ATP = dCDP + ADP. This Caulobacter sp. (strain K31) protein is Cytidylate kinase.